A 31-amino-acid chain; its full sequence is Photosystem II reaction center protein M (31 aa).

The chain crosses the membrane as a helical span at residues 5-25 (ILAFIATALLILVPTAFLLII).

Belongs to the PsbM family. As to quaternary structure, PSII is composed of 1 copy each of membrane proteins PsbA, PsbB, PsbC, PsbD, PsbE, PsbF, PsbH, PsbI, PsbJ, PsbK, PsbL, PsbM, PsbT, PsbX, PsbY, PsbZ, Psb30/Ycf12, at least 3 peripheral proteins of the oxygen-evolving complex and a large number of cofactors. It forms dimeric complexes.

Its subcellular location is the plastid membrane. In terms of biological role, one of the components of the core complex of photosystem II (PSII). PSII is a light-driven water:plastoquinone oxidoreductase that uses light energy to abstract electrons from H(2)O, generating O(2) and a proton gradient subsequently used for ATP formation. It consists of a core antenna complex that captures photons, and an electron transfer chain that converts photonic excitation into a charge separation. This subunit is found at the monomer-monomer interface. The polypeptide is Photosystem II reaction center protein M (Cuscuta reflexa (Southern Asian dodder)).